The following is a 413-amino-acid chain: Protein PHR1-LIKE 1 (413 aa).

Disordered stretches follow at residues 171–196 (SEPNWSELLGDSSSHNPNSEIPTPFL) and 208–233 (QQQMVSSEDQLSGRNSSSSVATSKQR). 2 stretches are compositionally biased toward polar residues: residues 181-191 (DSSSHNPNSEI) and 208-231 (QQQMVSSEDQLSGRNSSSSVATSK). The HTH myb-type domain occupies 228 to 288 (ATSKQRMRWT…HLQKYRTARY (61 aa)). The segment at residues 259 to 284 (PKAVLKLLNNPGLTIYHVKSHLQKYR) is a DNA-binding region (H-T-H motif). A coiled coil region spans residues 322–342 (TQALRLQMEVQKRLHEQLEIQ). Residues 335–340 (LHEQLE) carry the LHEQLE motif. The tract at residues 363 to 413 (QQKIQDNKSSSSEASPKQCNGSFAEVEVGLETLTGDQNESASASRKRVRED) is disordered. Composition is skewed to polar residues over residues 369–383 (NKSSSSEASPKQCNG) and 396–405 (TGDQNESASA).

The protein belongs to the MYB-CC family. As to quaternary structure, homodimers and heterodimers. Interacts with MED25. Does not interact with PHL2 or PHL3. In terms of tissue distribution, expressed in shoots and roots.

It is found in the nucleus. Transcription factor acting as central integrator of phosphate starvation responses. Regulates FER1 expression upon phosphate starvation, linking iron and phosphate homeostasis. In Arabidopsis thaliana (Mouse-ear cress), this protein is Protein PHR1-LIKE 1 (PHL1).